The primary structure comprises 217 residues: Putative threonylcarbamoyl-AMP synthase (217 aa).

Residues serine 14–valine 199 form the YrdC-like domain.

Belongs to the SUA5 family.

It is found in the cytoplasm. It carries out the reaction L-threonine + hydrogencarbonate + ATP = L-threonylcarbamoyladenylate + diphosphate + H2O. Required for the formation of a threonylcarbamoyl group on adenosine at position 37 (t(6)A37) in tRNAs that read codons beginning with adenine. Catalyzes the conversion of L-threonine, HCO(3)(-)/CO(2) and ATP to give threonylcarbamoyl-AMP (TC-AMP) as the acyladenylate intermediate, with the release of diphosphate. The protein is Putative threonylcarbamoyl-AMP synthase of Mycobacterium tuberculosis (strain CDC 1551 / Oshkosh).